The sequence spans 118 residues: Large ribosomal subunit protein bL20 (118 aa).

Belongs to the bacterial ribosomal protein bL20 family.

In terms of biological role, binds directly to 23S ribosomal RNA and is necessary for the in vitro assembly process of the 50S ribosomal subunit. It is not involved in the protein synthesizing functions of that subunit. This is Large ribosomal subunit protein bL20 from Lacticaseibacillus casei (strain BL23) (Lactobacillus casei).